A 68-amino-acid polypeptide reads, in one-letter code: Large ribosomal subunit protein bL35 (68 aa).

The protein belongs to the bacterial ribosomal protein bL35 family.

The sequence is that of Large ribosomal subunit protein bL35 from Fusobacterium nucleatum subsp. nucleatum (strain ATCC 25586 / DSM 15643 / BCRC 10681 / CIP 101130 / JCM 8532 / KCTC 2640 / LMG 13131 / VPI 4355).